We begin with the raw amino-acid sequence, 680 residues long: ABC transporter B family member 24, mitochondrial (680 aa).

The N-terminal 75 residues, 1–75, are a transit peptide targeting the mitochondrion; it reads MMRVSQLQLC…MFFSTSTSAP (75 aa). One can recognise an ABC transmembrane type-1 domain in the interval 108–402; that stretch reads VISAFACLVG…LGVVYSDTVQ (295 aa). 6 helical membrane passes run 109 to 129, 145 to 165, 232 to 252, 255 to 275, 340 to 360, and 376 to 396; these read ISAFACLVGAKFLNVQVPFLF, NPYLVAAFATPSSVLIGYGIA, AMVFNIMPTILEISMVSCILA, FGAVYALITCLSVGSYIAFTL, FALLNFGQSFIFSTALSTAMV, and LVMVNGLLFQLSLPLYFLGVV. Positions 439–673 constitute an ABC transporter domain; sequence ISFENVHFSY…SGRYAKLWTQ (235 aa). ATP-binding positions include Tyr448 and 472–483; that span reads GSSGSGKSTILR.

Belongs to the ABC transporter superfamily. ABCB family. Heavy Metal importer (TC 3.A.1.210) subfamily. In terms of assembly, homodimer. As to expression, mostly expressed at low levels in roots and flowers.

It is found in the mitochondrion inner membrane. Its function is as follows. Performs an essential function in the generation of cytoplasmic iron-sulfur proteins by mediating export of Fe/S cluster precursors synthesized by NFS1 and other mitochondrial proteins. Not involved in the export of cyclic pyranopterin monophosphate (cPMP) from mitochondria to the cytosol. This chain is ABC transporter B family member 24, mitochondrial (ABCB24), found in Arabidopsis thaliana (Mouse-ear cress).